The chain runs to 258 residues: Alpha-hydroxynitrile lyase (258 aa).

Residues Ser81 and His236 each act as proton donor/acceptor in the active site.

This sequence belongs to the AB hydrolase superfamily. Hydroxynitrile lyase family. As to quaternary structure, homodimer.

The enzyme catalyses (R)-mandelonitrile = benzaldehyde + hydrogen cyanide. In terms of biological role, involved in cyanogenesis, the release of HCN from injured tissues. Displays R-selective hydroxynitrile lyase activity. Also accepts nitromethane (MeNO2) as a donor in a reaction with aromatic aldehydes to yield (R)-beta-nitro alcohols. The sequence is that of Alpha-hydroxynitrile lyase from Arabidopsis thaliana (Mouse-ear cress).